A 682-amino-acid chain; its full sequence is Potassium-transporting ATPase ATP-binding subunit (682 aa).

4 helical membrane-spanning segments follow: residues 34-54, 62-82, 219-239, and 254-274; these read PVMFIVWIGSLLTTCISIAMA, ALFSAAISGWLWVTVLFANFA, IALTILLIALTIVFLLATATL, and VLVALLVCLIPTTIGGLLSAI. The 4-aspartylphosphate intermediate role is filled by Asp-307. Residues Asp-344, Glu-348, 377–384, and Lys-395 contribute to the ATP site; that span reads FTAQSRMS. Residues Asp-518 and Asp-522 each coordinate Mg(2+). The next 3 membrane-spanning stretches (helical) occupy residues 588 to 608, 616 to 636, and 656 to 676; these read FAIIPAAFAATYPQLNALNIM, AILSAVIFNALIIVFLIPLAL, and IYGLGGLLVPFIGIKVIDLLL.

The protein belongs to the cation transport ATPase (P-type) (TC 3.A.3) family. Type IA subfamily. In terms of assembly, the system is composed of three essential subunits: KdpA, KdpB and KdpC.

It is found in the cell inner membrane. It carries out the reaction K(+)(out) + ATP + H2O = K(+)(in) + ADP + phosphate + H(+). Its function is as follows. Part of the high-affinity ATP-driven potassium transport (or Kdp) system, which catalyzes the hydrolysis of ATP coupled with the electrogenic transport of potassium into the cytoplasm. This subunit is responsible for energy coupling to the transport system and for the release of the potassium ions to the cytoplasm. This is Potassium-transporting ATPase ATP-binding subunit from Shigella boydii serotype 18 (strain CDC 3083-94 / BS512).